The sequence spans 110 residues: MKAIFVSALLVVALVASTSAHHQELCTKGDDALVTELECIRLRISPETNAAFDNAVQQLNCLNRACAYRKMCATNNLEQAMSVYFTNEQIKEIHDAATACDPEAHHEHDH.

Positions 1–20 (MKAIFVSALLVVALVASTSA) are cleaved as a signal peptide. 3 disulfide bridges follow: Cys26–Cys72, Cys39–Cys100, and Cys61–Cys66.

In terms of tissue distribution, expressed in the hemocytes, fat body and ovaries.

It is found in the secreted. Has bacteriostatic activity against the Gram-positive bacterium M.luteus, but not against Gram-negative bacterium E.coli SBS363. Has fungistatic activity against C.neoformans, but not C.albicans. Binds and sequesters copper and iron ions. Copper-chelating is crucial for antimicrobial activity against M.luteus. The chain is Antimicrobial peptide microplusin from Rhipicephalus microplus (Cattle tick).